The following is a 258-amino-acid chain: MLAKRIIPCLDVKDGQVVKGVQFRNHEIIGDIVPLAQRYAQEGADELVFYDITASSDGRVVDKSWVARVAEVIDIPFCVAGGIKSVEDASQILTFGADKISINSPALADPTLITRLADRYGVQCIVVGIDTWYDTESDSYQVYQFTGDEKRTKATTWQTEDWVKEVQLRGAGEIVLNMMNQDGVRNGYDLRQLQQMRAICHVPLIASGGAGTPDHFLEAFRDADVDGALAASVFHKKIINIGELKKYLSEQGVEIRVC.

Residues Asp-11 and Asp-130 contribute to the active site.

It belongs to the HisA/HisF family. Heterodimer of HisH and HisF.

It is found in the cytoplasm. It catalyses the reaction 5-[(5-phospho-1-deoxy-D-ribulos-1-ylimino)methylamino]-1-(5-phospho-beta-D-ribosyl)imidazole-4-carboxamide + L-glutamine = D-erythro-1-(imidazol-4-yl)glycerol 3-phosphate + 5-amino-1-(5-phospho-beta-D-ribosyl)imidazole-4-carboxamide + L-glutamate + H(+). The protein operates within amino-acid biosynthesis; L-histidine biosynthesis; L-histidine from 5-phospho-alpha-D-ribose 1-diphosphate: step 5/9. Functionally, IGPS catalyzes the conversion of PRFAR and glutamine to IGP, AICAR and glutamate. The HisF subunit catalyzes the cyclization activity that produces IGP and AICAR from PRFAR using the ammonia provided by the HisH subunit. This Yersinia pestis (strain Pestoides F) protein is Imidazole glycerol phosphate synthase subunit HisF.